The chain runs to 437 residues: Type II methyltransferase M.HgiBI (437 aa).

The SAM-dependent MTase C5-type domain occupies 4 to 431 (FRFIDLFAGI…KALQCVKLFE (428 aa)). Cys-75 is a catalytic residue.

Belongs to the class I-like SAM-binding methyltransferase superfamily. C5-methyltransferase family.

The catalysed reaction is a 2'-deoxycytidine in DNA + S-adenosyl-L-methionine = a 5-methyl-2'-deoxycytidine in DNA + S-adenosyl-L-homocysteine + H(+). In terms of biological role, a methylase that recognizes the double-stranded sequence 5'-GGWCC-3', methylates C-? on both strands, and protects the DNA from cleavage by the HgiBI endonuclease. This system is less active than isoschizomeric RM.HgiEI. This Herpetosiphon aurantiacus (Herpetosiphon giganteus) protein is Type II methyltransferase M.HgiBI.